Here is a 465-residue protein sequence, read N- to C-terminus: Branched-chain amino acid permease BcaP (465 aa).

Helical transmembrane passes span 28-48, 56-76, 88-110, 149-169, 181-201, 219-239, 259-279, 309-329, 359-379, 380-400, 416-436, and 438-458; these read FLAL…PGQV, GVVF…LAYA, AYSW…ALLA, DGGI…IIVF, ILVV…ITVI, FGGF…YIGF, GIIG…LVLV, VVTA…VLAG, VWTL…AFLA, QLIS…IYSL, PFYP…FWGL, and VQAK…YFAY.

This sequence belongs to the amino acid-polyamine-organocation (APC) superfamily.

It localises to the cell membrane. Branched-chain amino acid transport system that specifically transports branched-chain amino acids (BCAAs) (isoleucine, leucine and valine) and, to a lesser extent, methionine. Important for CodY-mediated regulation, and required for optimal growth in media containing free amino acids as the only amino acid source. The polypeptide is Branched-chain amino acid permease BcaP (Lactococcus lactis subsp. cremoris (strain MG1363)).